Consider the following 170-residue polypeptide: Endoribonuclease YbeY (170 aa).

Zn(2+)-binding residues include H118, H122, and H128.

This sequence belongs to the endoribonuclease YbeY family. The cofactor is Zn(2+).

Its subcellular location is the cytoplasm. Single strand-specific metallo-endoribonuclease involved in late-stage 70S ribosome quality control and in maturation of the 3' terminus of the 16S rRNA. This Mycobacteroides abscessus (strain ATCC 19977 / DSM 44196 / CCUG 20993 / CIP 104536 / JCM 13569 / NCTC 13031 / TMC 1543 / L948) (Mycobacterium abscessus) protein is Endoribonuclease YbeY.